Consider the following 330-residue polypeptide: Glucokinase (330 aa).

Ala14 to Thr19 is an ATP binding site.

Belongs to the bacterial glucokinase family.

The protein resides in the cytoplasm. It catalyses the reaction D-glucose + ATP = D-glucose 6-phosphate + ADP + H(+). This chain is Glucokinase, found in Colwellia psychrerythraea (strain 34H / ATCC BAA-681) (Vibrio psychroerythus).